A 217-amino-acid polypeptide reads, in one-letter code: Small ribosomal subunit protein uS3c (217 aa).

Residues I47–I118 form the KH type-2 domain.

This sequence belongs to the universal ribosomal protein uS3 family. As to quaternary structure, part of the 30S ribosomal subunit.

The protein localises to the plastid. The protein resides in the chloroplast. This chain is Small ribosomal subunit protein uS3c (rps3), found in Adiantum capillus-veneris (Maidenhair fern).